The following is a 473-amino-acid chain: Cysteine--tRNA ligase (473 aa).

Residue C28 participates in Zn(2+) binding. The short motif at 30-40 (MTVYDFCHIGH) is the 'HIGH' region element. Zn(2+)-binding residues include C212, H237, and E241. The 'KMSKS' region signature appears at 277–281 (KMSKS). K280 lines the ATP pocket.

It belongs to the class-I aminoacyl-tRNA synthetase family. Monomer. It depends on Zn(2+) as a cofactor.

The protein localises to the cytoplasm. The enzyme catalyses tRNA(Cys) + L-cysteine + ATP = L-cysteinyl-tRNA(Cys) + AMP + diphosphate. This is Cysteine--tRNA ligase from Polynucleobacter necessarius subsp. necessarius (strain STIR1).